Here is a 97-residue protein sequence, read N- to C-terminus: RNA-binding protein Hfq (97 aa).

A Sm domain is found at 10–70 (DPFLNALRKE…ISTIVPARSV (61 aa)).

This sequence belongs to the Hfq family. In terms of assembly, homohexamer.

Functionally, RNA chaperone that binds small regulatory RNA (sRNAs) and mRNAs to facilitate mRNA translational regulation in response to envelope stress, environmental stress and changes in metabolite concentrations. Also binds with high specificity to tRNAs. The polypeptide is RNA-binding protein Hfq (Neisseria gonorrhoeae (strain ATCC 700825 / FA 1090)).